The primary structure comprises 61 residues: Protein A40 homolog (61 aa).

At M1–A11 the chain is on the cytoplasmic side. The chain crosses the membrane as a helical; Signal-anchor for type II membrane protein span at residues G12–L32. The Extracellular segment spans residues K33–D61.

This sequence belongs to the poxviridae A40 protein family.

Its subcellular location is the host membrane. This chain is Protein A40 homolog (A45R), found in Homo sapiens (Human).